A 343-amino-acid chain; its full sequence is Major histocompatibility complex class I-related protein 1 (343 aa).

The signal sequence occupies residues 1 to 18; sequence MMFLLPFLTVFLAKQSHT. Residues 19 to 105 form an alpha-1 region; sequence RTHSLRYFRL…RHLQRHYNHS (87 aa). The interval 19 to 197 is antigen-binding cleft; it reads RTHSLRYFRL…EYGSDALERT (179 aa). The Extracellular portion of the chain corresponds to 19 to 298; sequence RTHSLRYFRL…QESGNTLLVA (280 aa). 8-(9H-purin-6-yl)-2-oxa-8-azabicyclo[3.3.1]nona-3,6-diene-4,6-dicarbaldehyde-binding residues include Tyr25 and Arg27. Arg27, Ser42, and Lys61 together coordinate 5-(2-oxoethylideneamino)-6-(D-ribitylamino)uracil. 5-(2-oxopropylideneamino)-6-(D-ribitylamino)uracil-binding residues include Arg27, Ser42, and Lys61. 7-hydroxy-6-methyl-8-(1-D-ribityl)lumazine contacts are provided by Arg27, Ser42, and Lys61. Residues Lys61 and His76 each coordinate 8-(9H-purin-6-yl)-2-oxa-8-azabicyclo[3.3.1]nona-3,6-diene-4,6-dicarbaldehyde. Lys61 lines the 2-amino-4-oxopteridine-6-carbaldehyde pocket. Residue Lys61 participates in pyridoxal binding. An N-linked (GlcNAc...) asparagine glycan is attached at Asn103. The interval 106-197 is alpha-2; the sequence is GLHTYQRMIG…EYGSDALERT (92 aa). Residue Arg112 coordinates 8-(9H-purin-6-yl)-2-oxa-8-azabicyclo[3.3.1]nona-3,6-diene-4,6-dicarbaldehyde. Residues Arg112, Tyr170, and Gln171 each coordinate 5-(2-oxoethylideneamino)-6-(D-ribitylamino)uracil. 5-(2-oxopropylideneamino)-6-(D-ribitylamino)uracil-binding residues include Arg112, Tyr170, and Gln171. Arg112, Tyr170, and Gln171 together coordinate 7-hydroxy-6-methyl-8-(1-D-ribityl)lumazine. 2 cysteine pairs are disulfide-bonded: Cys116/Cys179 and Cys218/Cys274. The interval 198-289 is alpha-3; the sequence is EHPVVRTTRK…GLQMVLEAPQ (92 aa). Residues 200 to 302 enclose the Ig-like C1-type domain; that stretch reads PVVRTTRKET…NTLLVANTIS (103 aa). The connecting peptide stretch occupies residues 290–298; sequence ESGNTLLVA. The chain crosses the membrane as a helical span at residues 299-319; that stretch reads NTISGTIILIIVLAGVGALIW. Residues 320–343 are Cytoplasmic-facing; that stretch reads RRRSREPKEVMYQPTQVNEGSSPS.

As to quaternary structure, heterotrimer that consists of MR1, B2M and metabolite antigen. Major classes of metabolite ligands presented by MR1 include riboflavin-related antigens, pyrimidines and ribityl lumazines, nucleobase adducts and folate derivatives. Forms reversible covalent Schiff base complexes with microbial pyrimidine-based metabolite, which serves as a molecular switch triggering complete folding, stable association with B2M and translocation of the ternary complex from endoplasmic reticulum to the plasma membrane. Alternatively, forms non-Schiff base complexes with ribityl lumazines. On antigen-presenting cells, the ternary complex interacts with TCR on MR1-restricted T cells. Interacts with TAPBP and TAPBPL chaperones in the endoplasmic reticulum. TAPBP associated or not with MHC class I peptide loading complex binds ligand-free MR1 or MR1-B2M complex, providing for stable MR1 pools ready for metabolite antigen processing. TAPBPL interacts with MR1 in a ligand-independent way; this interaction may stabilize MR1 pool and facilitate ligand loading and dissociation. Structurally, MR1-B2M heterodimer adopts a topology similar to classical MHC class I molecules, with alpha-1 and alpha-2 domains of MR1 forming the antigen-binding cleft composed of two alpha-helices resting on a floor of 7-stranded anti-parallel beta-pleated sheet. MR1-B2M heterodimer (via alpha-helices) interacts with TCR (via CDR domains). N-glycosylated. In terms of tissue distribution, expressed in kidney, liver, testis, spleen, thymus, brain, and heart.

The protein resides in the cell membrane. It localises to the endoplasmic reticulum membrane. It is found in the golgi apparatus membrane. The protein localises to the early endosome membrane. Its subcellular location is the late endosome membrane. Its function is as follows. Antigen-presenting molecule specialized in displaying microbial pyrimidine-based metabolites to alpha-beta T cell receptors (TCR) on innate-type mucosal-associated invariant T (MAIT) cells. In complex with B2M preferentially presents riboflavin-derived metabolites to semi-invariant TCRs on MAIT cells, guiding immune surveillance of the microbial metabolome at mucosal epithelial barriers. Signature pyrimidine-based microbial antigens are generated via non-enzymatic condensation of metabolite intermediates of the riboflavin pathway with by-products arising from other metabolic pathways such as glycolysis. Typical potent antigenic metabolites are 5-(2-oxoethylideneamino)-6-D-ribitylaminouracil (5-OE-RU) and 5-(2-oxopropylideneamino)-6-D-ribitylaminouracil (5-OP-RU), products of condensation of 5-amino-6-D-ribityaminouracil (5-A-RU) with glyoxal or methylglyoxal by-products, respectively. May present microbial antigens to various MAIT cell subsets, providing for unique recognition of diverse microbes, including pathogens that do not synthesize riboflavin. Upon antigen recognition, elicits rapid innate-type MAIT cell activation to eliminate pathogenic microbes by directly killing infected cells. During T cell development, drives thymic selection and post-thymic terminal differentiation of MAIT cells in a process dependent on commensal microflora. Acts as an immune sensor of cancer cell metabolome. May present a tumor-specific or -associated metabolite essential for cancer cell survival to a pan-cancer TCR on a non-MAIT CD8-positive T cell clone, triggering T cell-mediated killing of a wide range of cancer cell types. May present tumor-enriched pyridoxal and pyridoxal 5'-phosphate antigens, enabling preferential recognition of cancer cells. Presents nucleobase carbonyl adducts generated during oxidative stress. Captures M3Ade, a nucleobase adduct composed of one adenine modified by a malondialdehyde trimer, for recognition by MR1-restricted T cell clones expressing a polyclonal TCR repertoire. The chain is Major histocompatibility complex class I-related protein 1 from Rattus norvegicus (Rat).